The chain runs to 453 residues: Exopolyphosphatase PRUNE1 (453 aa).

Methionine 1 carries the post-translational modification N-acetylmethionine. Mn(2+)-binding residues include aspartate 28, aspartate 30, aspartate 106, and aspartate 179. The DHH motif signature appears at 106-108 (DHH). Residues 393-420 (SLLSGLSQDEEEPPLPPTPMNSLVDECP) form an essential for homodimerization region. Residues 396–419 (SGLSQDEEEPPLPPTPMNSLVDEC) form a disordered region. Phosphoserine is present on serine 399. Position 410 is a phosphothreonine (threonine 410). Serine 414 is modified (phosphoserine).

Belongs to the PPase class C family. Prune subfamily. Homooligomer. Able to homodimerize via its C-terminal domain. Interacts with NME1. Interacts with GSK3; at focal adhesion complexes where paxillin and vinculin are colocalized. Mn(2+) is required as a cofactor.

The protein localises to the cytoplasm. It is found in the nucleus. It localises to the cell junction. Its subcellular location is the focal adhesion. It carries out the reaction diphosphate + H2O = 2 phosphate + H(+). Activated by magnesium ions and inhibited by manganese ions. Inhibited by dipyridamole, moderately sensitive to IBMX and inhibited by vinpocetine. Phosphodiesterase (PDE) that has higher activity toward cAMP than cGMP, as substrate. Plays a role in cell proliferation, is able to induce cell motility and acts as a negative regulator of NME1. This chain is Exopolyphosphatase PRUNE1 (PRUNE1), found in Bos taurus (Bovine).